The chain runs to 346 residues: Heat-inducible transcription repressor HrcA (346 aa).

This sequence belongs to the HrcA family.

In terms of biological role, negative regulator of class I heat shock genes (grpE-dnaK-dnaJ and groELS operons). Prevents heat-shock induction of these operons. The protein is Heat-inducible transcription repressor HrcA of Kineococcus radiotolerans (strain ATCC BAA-149 / DSM 14245 / SRS30216).